A 269-amino-acid polypeptide reads, in one-letter code: uncharacterized protein (269 aa).

Residues 52–262 (KNVYEQLVAT…RKILVESINK (211 aa)) adopt a coiled-coil conformation.

This is an uncharacterized protein from Caenorhabditis elegans.